Consider the following 167-residue polypeptide: Crossover junction endodeoxyribonuclease RuvC (167 aa).

Active-site residues include D11, E71, and D143. The Mg(2+) site is built by D11, E71, and D143.

The protein belongs to the RuvC family. As to quaternary structure, homodimer which binds Holliday junction (HJ) DNA. The HJ becomes 2-fold symmetrical on binding to RuvC with unstacked arms; it has a different conformation from HJ DNA in complex with RuvA. In the full resolvosome a probable DNA-RuvA(4)-RuvB(12)-RuvC(2) complex forms which resolves the HJ. It depends on Mg(2+) as a cofactor.

Its subcellular location is the cytoplasm. It carries out the reaction Endonucleolytic cleavage at a junction such as a reciprocal single-stranded crossover between two homologous DNA duplexes (Holliday junction).. Its function is as follows. The RuvA-RuvB-RuvC complex processes Holliday junction (HJ) DNA during genetic recombination and DNA repair. Endonuclease that resolves HJ intermediates. Cleaves cruciform DNA by making single-stranded nicks across the HJ at symmetrical positions within the homologous arms, yielding a 5'-phosphate and a 3'-hydroxyl group; requires a central core of homology in the junction. The consensus cleavage sequence is 5'-(A/T)TT(C/G)-3'. Cleavage occurs on the 3'-side of the TT dinucleotide at the point of strand exchange. HJ branch migration catalyzed by RuvA-RuvB allows RuvC to scan DNA until it finds its consensus sequence, where it cleaves and resolves the cruciform DNA. The polypeptide is Crossover junction endodeoxyribonuclease RuvC (Bartonella bacilliformis (strain ATCC 35685 / KC583 / Herrer 020/F12,63)).